The chain runs to 190 residues: dTTP/UTP pyrophosphatase (190 aa).

The active-site Proton acceptor is the D70.

It belongs to the Maf family. YhdE subfamily. The cofactor is a divalent metal cation.

It is found in the cytoplasm. It catalyses the reaction dTTP + H2O = dTMP + diphosphate + H(+). It carries out the reaction UTP + H2O = UMP + diphosphate + H(+). Nucleoside triphosphate pyrophosphatase that hydrolyzes dTTP and UTP. May have a dual role in cell division arrest and in preventing the incorporation of modified nucleotides into cellular nucleic acids. The sequence is that of dTTP/UTP pyrophosphatase from Gloeobacter violaceus (strain ATCC 29082 / PCC 7421).